We begin with the raw amino-acid sequence, 257 residues long: ATP synthase subunit a (257 aa).

Transmembrane regions (helical) follow at residues 34-54 (ITNI…FSIL), 93-113 (YFPF…IGMV), 122-142 (HFIL…VLGF), 149-169 (FFSL…LVLI), 187-207 (ANIL…YNIM), and 210-230 (GIIF…FSGL).

It belongs to the ATPase A chain family. In terms of assembly, F-type ATPases have 2 components, CF(1) - the catalytic core - and CF(0) - the membrane proton channel. CF(1) has five subunits: alpha(3), beta(3), gamma(1), delta(1), epsilon(1). CF(0) has three main subunits: a, b and c.

It is found in the mitochondrion inner membrane. Functionally, mitochondrial membrane ATP synthase (F(1)F(0) ATP synthase or Complex V) produces ATP from ADP in the presence of a proton gradient across the membrane which is generated by electron transport complexes of the respiratory chain. F-type ATPases consist of two structural domains, F(1) - containing the extramembraneous catalytic core and F(0) - containing the membrane proton channel, linked together by a central stalk and a peripheral stalk. During catalysis, ATP synthesis in the catalytic domain of F(1) is coupled via a rotary mechanism of the central stalk subunits to proton translocation. Key component of the proton channel; it may play a direct role in the translocation of protons across the membrane. This Cochliobolus heterostrophus (Southern corn leaf blight fungus) protein is ATP synthase subunit a (ATP6).